The following is a 239-amino-acid chain: Fatty acid metabolism regulator protein (239 aa).

The region spanning 6–74 is the HTH gntR-type domain; that stretch reads KGPASFAEKY…HGKPTRVNNF (69 aa). A DNA-binding region (H-T-H motif) is located at residues 34–53; sequence ERELSELIGVTRTTLREVLQ.

As to quaternary structure, homodimer.

Its subcellular location is the cytoplasm. Multifunctional regulator of fatty acid metabolism. The protein is Fatty acid metabolism regulator protein of Shewanella halifaxensis (strain HAW-EB4).